Here is a 248-residue protein sequence, read N- to C-terminus: Granulin (248 aa).

Belongs to the polyhedrin family.

Component of the virus occlusion bodies, which are large proteinaceous structures, that protect the virus from the outside environment for extended periods until they are ingested by insect larvae. In Trichoplusia ni (Cabbage looper), this protein is Granulin.